The primary structure comprises 210 residues: Small ribosomal subunit protein uS3 (210 aa).

The region spanning 17–86 (IDEFLEKELR…NPQIDVQEIK (70 aa)) is the KH type-2 domain.

It belongs to the universal ribosomal protein uS3 family. As to quaternary structure, part of the 30S ribosomal subunit.

Functionally, binds the lower part of the 30S subunit head. The polypeptide is Small ribosomal subunit protein uS3 (Pyrococcus horikoshii (strain ATCC 700860 / DSM 12428 / JCM 9974 / NBRC 100139 / OT-3)).